Consider the following 518-residue polypeptide: Squalene monooxygenase 1,2 (518 aa).

2 consecutive transmembrane segments (helical) span residues 3–23 (MAFVEVCLRMLLVFVLSWTIF) and 48–68 (GPDVIIVGAGVGGSALAYALA). FAD is bound by residues 58-59 (VG), 78-79 (ER), arginine 86, phenylalanine 91, arginine 158, valine 174, aspartate 337, and methionine 350. A helical transmembrane segment spans residues 448-468 (LFYHLFVISLSSIGQLLSPFP).

This sequence belongs to the squalene monooxygenase family. It depends on FAD as a cofactor.

The protein localises to the membrane. The enzyme catalyses squalene + reduced [NADPH--hemoprotein reductase] + O2 = (S)-2,3-epoxysqualene + oxidized [NADPH--hemoprotein reductase] + H2O + H(+). It functions in the pathway terpene metabolism; lanosterol biosynthesis; lanosterol from farnesyl diphosphate: step 2/3. Functionally, catalyzes the stereospecific oxidation of squalene to (S)-2,3-epoxysqualene, and is considered to be a rate-limiting enzyme in steroid biosynthesis. In Brassica napus (Rape), this protein is Squalene monooxygenase 1,2 (SQP1,2).